Reading from the N-terminus, the 598-residue chain is Ceramide transfer protein (598 aa).

Over residues 1 to 11 (MSDNQSWNSSG) the composition is skewed to polar residues. The disordered stretch occupies residues 1–24 (MSDNQSWNSSGSEEDPETESGPPV). Residues 23–117 (PVERCGVLSK…WIDAIEQHKT (95 aa)) enclose the PH domain. Position 126 is a phosphoserine (serine 126). The residue at position 132 (serine 132) is a Phosphoserine; by PKD. A Phosphoserine modification is found at serine 135. The interval 202–221 (DDEDDFPTTRSDGDFLHNTN) is disordered. Residues 268 to 301 (KREESWQKRHDKEMEKRRRLEEAYKNAMAELKKK) are a coiled coil. A Phosphoserine modification is found at serine 315. The FFAT signature appears at 321–327 (EFFDAVE). In terms of domain architecture, START spans 363 to 592 (GTHRFVQKVE…FTSYVQEKTA (230 aa)). Glutamate 446, glutamine 467, asparagine 504, and tyrosine 553 together coordinate an N-acylsphing-4-enine.

Interacts with VAPA and VAPB. Interaction with VAPB is less efficient than with VAPA. Interacts (via FFAT motif) with the MOSPD2 (via MSP domain). In terms of processing, phosphorylation on Ser-132 decreases the affinity toward phosphatidylinositol 4-phosphate at Golgi membranes and reduces ceramide transfer activity. Inactivated by hyperphosphorylation of serine residues by CSNK1G2/CK1 that triggers dissociation from the Golgi complex, thus down-regulating ER-to-Golgi transport of ceramide and sphingomyelin synthesis.

It is found in the cytoplasm. The protein resides in the golgi apparatus. The protein localises to the endoplasmic reticulum. It catalyses the reaction N-hexadecanoylsphing-4-enine(in) = N-hexadecanoylsphing-4-enine(out). Shelters ceramides and diacylglycerol lipids inside its START domain and mediates the intracellular trafficking of ceramides and diacylglycerol lipids in a non-vesicular manner. The polypeptide is Ceramide transfer protein (CERT1) (Cricetulus griseus (Chinese hamster)).